We begin with the raw amino-acid sequence, 926 residues long: DNA topoisomerase 3-alpha (926 aa).

The region spanning 10 to 154 (TVLNVAEKPS…NLFIRRAHFS (145 aa)) is the Toprim domain. Residues Glu16, Asp123, and Asp125 each coordinate Mg(2+). Positions 172–604 (NQLFAEAVDA…CLQQMKACFL (433 aa)) constitute a Topo IA-type catalytic domain. The interaction with DNA stretch occupies residues 219–224 (SYGPCQ). The active-site O-(5'-phospho-DNA)-tyrosine intermediate is the Tyr342. Residues 642–670 (CNLCNESDMALRKNRDGNFMVGCMNYPQC) form a C4-type zinc finger. 2 disordered regions span residues 740 to 760 (SRSQ…QGSN) and 775 to 806 (HAST…TVSC). Residues 750 to 760 (TAPSNNIQGSN) show a composition bias toward polar residues. The CCHC-type 1 zinc-finger motif lies at 767 to 782 (CIHCQQRGHASTNCPS). 4 residues coordinate Zn(2+): Cys806, Cys809, Cys831, and Cys836. Residues 806-845 (CNTCGSQCVLRTANTEANRGRQFFSCPTQGCSFFAWEDSI) form a GRF-type zinc finger. The segment at 849 to 890 (SGNATTGSNSGGSGRRGSRGRGRGGRGGQSSGGRRGSGTSFV) is disordered. The segment covering 873 to 884 (GRGGQSSGGRRG) has biased composition (gly residues). The segment at 901-917 (RCFSCGDPSHFANACPN) adopts a CCHC-type 2 zinc-finger fold.

It belongs to the type IA topoisomerase family. As to quaternary structure, component of the RMI complex, containing at least TOP3A and RMI1. The RMI complex interacts with RECQL4A. The cofactor is Mg(2+).

It carries out the reaction ATP-independent breakage of single-stranded DNA, followed by passage and rejoining.. Its function is as follows. Releases the supercoiling and torsional tension of DNA introduced during the DNA replication and transcription by transiently cleaving and rejoining one strand of the DNA duplex. Introduces a single-strand break via transesterification at a target site in duplex DNA. The scissile phosphodiester is attacked by the catalytic tyrosine of the enzyme, resulting in the formation of a DNA-(5'-phosphotyrosyl)-enzyme intermediate and the expulsion of a 3'-OH DNA strand. The free DNA strand then undergoes passage around the unbroken strand thus removing DNA supercoils. Finally, in the religation step, the DNA 3'-OH attacks the covalent intermediate to expel the active-site tyrosine and restore the DNA phosphodiester backbone. Essential component of the RMI complex, a complex that plays an important role in the resolution step of homologous recombination, in a process called Holliday Junction dissolution, to limit DNA crossover formation in cells. Together with RMI1, is essential for the resolution of meiotic recombination intermediates, a step that prevents entanglement of the parental chromosomes. May have DNA decatenation activity. This chain is DNA topoisomerase 3-alpha (TOP3A), found in Arabidopsis thaliana (Mouse-ear cress).